The primary structure comprises 197 residues: Adenylyl-sulfate kinase (197 aa).

33-40 (GLSGSGKS) serves as a coordination point for ATP. The active-site Phosphoserine intermediate is serine 107.

Belongs to the APS kinase family.

It catalyses the reaction adenosine 5'-phosphosulfate + ATP = 3'-phosphoadenylyl sulfate + ADP + H(+). It functions in the pathway sulfur metabolism; hydrogen sulfide biosynthesis; sulfite from sulfate: step 2/3. Catalyzes the synthesis of activated sulfate. This Bacillus licheniformis (strain ATCC 14580 / DSM 13 / JCM 2505 / CCUG 7422 / NBRC 12200 / NCIMB 9375 / NCTC 10341 / NRRL NRS-1264 / Gibson 46) protein is Adenylyl-sulfate kinase.